The sequence spans 633 residues: DEAD-box ATP-dependent RNA helicase 37 (633 aa).

The disordered stretch occupies residues 1 to 110 (MSASWADVAD…WNNRSGGWDR (110 aa)). Serine 2 bears the N-acetylserine mark. The span at 11-25 (SENTGSGSSNQNSHP) shows a compositional bias: polar residues. Composition is skewed to gly residues over residues 68–80 (GGSG…GGGY) and 87–101 (PGSG…GGGW). Positions 159-187 (NTFAEIDLGEALNLNIRRCKYVKPTPVQR) match the Q motif motif. Positions 190–374 (IPILLEGRDL…ADFLANYIFL (185 aa)) constitute a Helicase ATP-binding domain. 203–210 (AQTGSGKT) contributes to the ATP binding site. The short motif at 318–321 (DEAD) is the DEAD box element. Residues 401-552 (HLMDLLHAQR…EVPEWLTRYA (152 aa)) form the Helicase C-terminal domain. The interval 555 to 600 (SSFGGGKNRRSGGRFGGRDFRREGSFGSGRGGYGGGGGGYGGGGGY) is disordered. Positions 580–600 (FGSGRGGYGGGGGGYGGGGGY) are enriched in gly residues.

It belongs to the DEAD box helicase family. DDX3/DED1 subfamily.

The enzyme catalyses ATP + H2O = ADP + phosphate + H(+). The protein is DEAD-box ATP-dependent RNA helicase 37 (RH37) of Arabidopsis thaliana (Mouse-ear cress).